A 385-amino-acid chain; its full sequence is GDSL esterase/lipase At5g08460 (385 aa).

Positions 1-35 (MHDSEIFKFKDMMMMSCTVQTLVLVPWFLVVFVLA) are cleaved as a signal peptide. Ser56 functions as the Nucleophile in the catalytic mechanism. N-linked (GlcNAc...) asparagine glycosylation is found at Asn218 and Asn285. Active-site residues include Asp350 and His353. Residues Asn368 and Asn378 are each glycosylated (N-linked (GlcNAc...) asparagine).

The protein belongs to the 'GDSL' lipolytic enzyme family.

It localises to the secreted. This Arabidopsis thaliana (Mouse-ear cress) protein is GDSL esterase/lipase At5g08460.